A 106-amino-acid chain; its full sequence is Large ribosomal subunit protein uL30 (106 aa).

The protein belongs to the universal ribosomal protein uL30 family. As to quaternary structure, part of the 50S ribosomal subunit.

This is Large ribosomal subunit protein uL30 from Ruthia magnifica subsp. Calyptogena magnifica.